The sequence spans 209 residues: Urease accessory protein UreG (209 aa).

Residue 10 to 17 (GPVGSGKT) coordinates GTP.

This sequence belongs to the SIMIBI class G3E GTPase family. UreG subfamily. Homodimer. UreD, UreF and UreG form a complex that acts as a GTP-hydrolysis-dependent molecular chaperone, activating the urease apoprotein by helping to assemble the nickel containing metallocenter of UreC. The UreE protein probably delivers the nickel.

The protein resides in the cytoplasm. Its function is as follows. Facilitates the functional incorporation of the urease nickel metallocenter. This process requires GTP hydrolysis, probably effectuated by UreG. This is Urease accessory protein UreG from Lysinibacillus sphaericus (strain C3-41).